Consider the following 722-residue polypeptide: Polyribonucleotide nucleotidyltransferase (722 aa).

Residues Asp-486 and Asp-492 each contribute to the Mg(2+) site. The KH domain maps to 553–612 (PRITTIQIRPEFIKNVIGPGGKVIKDIIARTGAAINIEDSGRVDIASANGEAVKAAIAMI). The S1 motif domain occupies 622–690 (GKIYTGTVRK…KTGKIRLSRK (69 aa)). Positions 696-722 (RAAQQGAAAGEAAAQPAPAPTQPDAKA) are disordered.

The protein belongs to the polyribonucleotide nucleotidyltransferase family. Mg(2+) serves as cofactor.

The protein localises to the cytoplasm. The catalysed reaction is RNA(n+1) + phosphate = RNA(n) + a ribonucleoside 5'-diphosphate. Involved in mRNA degradation. Catalyzes the phosphorolysis of single-stranded polyribonucleotides processively in the 3'- to 5'-direction. The sequence is that of Polyribonucleotide nucleotidyltransferase from Myxococcus xanthus (strain DK1622).